Consider the following 115-residue polypeptide: U3-lycotoxin-Ls1v (115 aa).

The first 20 residues, 1-20 (MKFVLLFGVLLVTLFSHSSA), serve as a signal peptide directing secretion. The propeptide occupies 21-44 (EMLDDFDQADEDELLSLIEKEEAR). 4 disulfides stabilise this stretch: cysteine 48–cysteine 63, cysteine 55–cysteine 72, cysteine 62–cysteine 87, and cysteine 74–cysteine 85.

The protein belongs to the neurotoxin 19 (CSTX) family. 01 subfamily. In terms of tissue distribution, expressed by the venom gland.

It localises to the secreted. The polypeptide is U3-lycotoxin-Ls1v (Lycosa singoriensis (Wolf spider)).